Reading from the N-terminus, the 405-residue chain is Acetylornithine/succinyldiaminopimelate aminotransferase (405 aa).

Pyridoxal 5'-phosphate contacts are provided by residues 108-109 and F141; that span reads GT. Residue R144 participates in N(2)-acetyl-L-ornithine binding. A pyridoxal 5'-phosphate-binding site is contributed by 226-229; the sequence is DEVQ. K255 carries the N6-(pyridoxal phosphate)lysine modification. S283 is a N(2)-acetyl-L-ornithine binding site. A pyridoxal 5'-phosphate-binding site is contributed by T284.

Belongs to the class-III pyridoxal-phosphate-dependent aminotransferase family. ArgD subfamily. Homodimer. The cofactor is pyridoxal 5'-phosphate.

Its subcellular location is the cytoplasm. The catalysed reaction is N(2)-acetyl-L-ornithine + 2-oxoglutarate = N-acetyl-L-glutamate 5-semialdehyde + L-glutamate. The enzyme catalyses N-succinyl-(2S,6S)-2,6-diaminopimelate + 2-oxoglutarate = (S)-2-succinylamino-6-oxoheptanedioate + L-glutamate. Its pathway is amino-acid biosynthesis; L-arginine biosynthesis; N(2)-acetyl-L-ornithine from L-glutamate: step 4/4. It functions in the pathway amino-acid biosynthesis; L-lysine biosynthesis via DAP pathway; LL-2,6-diaminopimelate from (S)-tetrahydrodipicolinate (succinylase route): step 2/3. In terms of biological role, involved in both the arginine and lysine biosynthetic pathways. This Salmonella typhi protein is Acetylornithine/succinyldiaminopimelate aminotransferase.